Here is a 135-residue protein sequence, read N- to C-terminus: Salivary protein 15 (135 aa).

The N-terminal stretch at 1–21 (MESFVAMKVVCILFLVGVVAA) is a signal peptide. Asn22 carries N-linked (GlcNAc...) asparagine glycosylation. Positions 48–67 (PNYISNHQKLALKLLKICKD) are required for Borrelia OspC-binding. 2 N-linked (GlcNAc...) asparagine glycosylation sites follow: Asn92 and Asn104. The tract at residues 116–135 (GPNGQTCAEKNKCVGHIPGC) is CD4-binding.

This sequence belongs to the salp15 family. Monomer. Interacts with host CD4. Interacts with host DC-SIGN (CD209). As to quaternary structure, (Microbial infection) Interacts with Borrelia outer surface protein C (OspC). Glycosylated. Expressed in salivary glands. Detected in host skin, at the site of natural inoculation.

It localises to the secreted. Functionally, salivary tick protein that downregulates host immune system by binding to both dendritic cells, and CD4(+) T cells. Specifically binds to the CD4 coreceptor on T cells. This interaction prevents the activation of the Src kinase, Lck, and its downstream substrate Zap-70, and results in deficient activation of PLCgamma1, the repression of calcium fluxes triggered by T-cell antigen receptor (TCR) ligation, and a subsequent reduction in interleukin-2 production. This salivary protein also binds to DC-SIGN (CD209) on dendritic cells (DC) and activates the Raf-1 kinase/MEK signaling pathway that results in down-regulating expression of pro-inflammatory cytokines. Furthermore, it inhibits T cell proliferation induced by DCs. It also inhibits in vitro keratinocyte inflammation induced by Borrelia burgdorferi or by the major outer surface protein (OspC) of Borrelia. In addition, it downregulates chemokines and monocyte chemoattractant protein 1, as well as several antimicrobial peptides such as defensins, cathelicidin, psoriasin, and RNase 7. Apart from its immunomodulatory activities, it is also associated with protection of Borrelia spirochetes from antibody-mediated killing through its binding to OspC. In vivo, tests on different immune disease animal models show promising therapeutic results, e.g., in inhibiting HIV infection, experimental autoimmune encephalomyelitis, transplantation rejection, and asthma. (Microbial infection) Protects Borrelia garinii (strains A87S and VSBP) from host complement-mediated killing. Its function is as follows. (Microbial infection) Partially protects Borrelia burgdorferi (strains VS215 and B31) from host complement-mediated killing. This chain is Salivary protein 15, found in Ixodes scapularis (Black-legged tick).